The primary structure comprises 307 residues: Elongation factor Ts (307 aa).

The tract at residues 80–83 is involved in Mg(2+) ion dislocation from EF-Tu; it reads TDFV.

Belongs to the EF-Ts family.

Its subcellular location is the cytoplasm. In terms of biological role, associates with the EF-Tu.GDP complex and induces the exchange of GDP to GTP. It remains bound to the aminoacyl-tRNA.EF-Tu.GTP complex up to the GTP hydrolysis stage on the ribosome. In Bradyrhizobium sp. (strain ORS 278), this protein is Elongation factor Ts.